A 528-amino-acid polypeptide reads, in one-letter code: Peptide chain release factor 3 (528 aa).

The region spanning 10–279 is the tr-type G domain; it reads AKRRTFAIIS…GLVEWAPAPM (270 aa). Residues 19 to 26, 87 to 91, and 141 to 144 contribute to the GTP site; these read SHPDAGKT, DTPGH, and NKLD.

It belongs to the TRAFAC class translation factor GTPase superfamily. Classic translation factor GTPase family. PrfC subfamily.

Its subcellular location is the cytoplasm. In terms of biological role, increases the formation of ribosomal termination complexes and stimulates activities of RF-1 and RF-2. It binds guanine nucleotides and has strong preference for UGA stop codons. It may interact directly with the ribosome. The stimulation of RF-1 and RF-2 is significantly reduced by GTP and GDP, but not by GMP. In Escherichia coli O1:K1 / APEC, this protein is Peptide chain release factor 3.